A 513-amino-acid polypeptide reads, in one-letter code: MSFFPPQQQQTPQPLFQTQQTSLFQPQQTNSIFSQSQPQQTNSIFSQSQPQQTNSIFSQPQQQQQTSLFQPQQFQQQQQQLNQQQQQQVQQQLYLFTNDKAPANYSTKWADLHPDSQKLLLQIEEKILEHRSESQRLDQCSRLYDSSVSSEGFEFDASRIVQELGGINTAMDRQKAVLHELMIVAKDMLRNAEIAVRSFMMLQPRFPHWKQGGGVVSVGSQPSQGQGTNPAPASSGQQQAVTTTVQVSDFYRGIPKKPTAFLLQTVVRFEKYLNECRQWVEELEQLLALDSDKYSRHASLLESLPKVMSNVHDFFVHVAAKVESIHQYIESMRTSYLADQRRRGECHDPFLEADRRETAKQEAAAKRVHPTLHLPASTTSTQPSTQVAGLIASSATPGGSNPPQTSVPTSNPSSGAGFSFLNTPASGPSSSLFATPSSTAPTSSLFGPSPTPTQTPLFGSSPASTFGSTQSLFGQTTPSLTMPSQFGGATPGSGASFGSMTKSSRPKSRTTRR.

Disordered stretches follow at residues 28–62 (QTNS…QPQQ), 217–239 (SVGS…GQQQ), and 356–513 (RETA…TTRR). Residues 30–50 (NSIFSQSQPQQTNSIFSQSQP) are compositionally biased toward polar residues. 2 stretches are compositionally biased toward low complexity: residues 51 to 62 (QQTNSIFSQPQQ) and 217 to 227 (SVGSQPSQGQG). Positions 356–365 (RETAKQEAAA) are enriched in basic and acidic residues. The segment covering 377–386 (STTSTQPSTQ) has biased composition (low complexity). Polar residues predominate over residues 393–427 (SSATPGGSNPPQTSVPTSNPSSGAGFSFLNTPASG). Over residues 428 to 446 (PSSSLFATPSSTAPTSSLF) the composition is skewed to low complexity. 6 tandem repeats follow at residues 446–447 (FG), 458–459 (FG), 466–467 (FG), 473–474 (FG), 486–487 (FG), and 497–498 (FG). Residues 446–498 (FGPSPTPTQTPLFGSSPASTFGSTQSLFGQTTPSLTMPSQFGGATPGSGASFG) form a 6 X 2 AA repeats of F-G region. The segment covering 452-484 (PTQTPLFGSSPASTFGSTQSLFGQTTPSLTMPS) has biased composition (polar residues). Residues 504–513 (SRPKSRTTRR) show a composition bias toward basic residues.

It belongs to the NUP58 family. As to quaternary structure, part of the nuclear pore complex (NPC). The NPC has an eight-fold symmetrical structure comprising a central transport channel and two rings, the cytoplasmic and nuclear rings, to which eight filaments are attached. The cytoplasmic filaments have loose ends, while the nuclear filaments are joined in a distal ring, forming a nuclear basket. NPCs are highly dynamic in configuration and composition, and can be devided in 3 subcomplexes, the NUP62 subcomplex, the NUP107-160 subcomplex and the NUP93 subcomplex, containing approximately 30 different nucleoporin proteins. Interacts with GAI, NUP62, SKP1A and SKP1B. Ubiquitous. Higherst expression in cauline leaves, lowest in roots.

The protein localises to the nucleus envelope. Its subcellular location is the nucleus. It is found in the nuclear pore complex. Its function is as follows. Involved in nucleocytoplasmic trafficking. May have regulatory roles in the gibberellin pathway, in auxin signaling and in light perception. The protein is Nuclear pore complex protein NUP58 of Arabidopsis thaliana (Mouse-ear cress).